Here is a 624-residue protein sequence, read N- to C-terminus: MAFSSSCSSVKAVNSRWTSPSPSPSSRFAVLPAFLHRRYATSVKLTAISAALKTVEQTTLTEDNRFSTVGSDSDEYNPTLPKPRILVTEKLGEAGVNLLREFGDVDCSYDLSPEDLKKKVAESDALIVRSGTKVTREVFEAAKGRLKVVGRAGVGIDNVDLQAATEHGCLVVNAPTANTVAAAEHGIALLASMARNVAQADASIKAGKWERSKYVGVSLVGKTLAVMGFGKVGTEVARRAKGLGMTVISHDPYAPADRARALGVDLVSFDQAISTADFVSLHMPLTPATKKVFNDETFSKMKKGVRLINVARGGVIDEDALVRALDAGIVAQAALDVFCEEPPSKDSRLIQHENVTVTPHLGASTKEAQEGVAIEIAEAVAGALKGELSATAVNAPMVAPEVLSELTPYIVLAEKLGRLAVQLASGGKGVQSIRVVYRSARDRDDLDTRLLRAMITKGIIEPISDSYVNLVNADFIAKQKGLRISEERMVVDSSPEYPVDSIQVQILNVESNFAGAVSDAGDISIEGKVKYGVPHLTCVGSFGVDVSLEGNLILCRQVDQPGMIGQVGNILGEQNVNVNFMSVGRTVLRKQAIMAIGVDEEPDNKTLERIGGVSAIEEFVFLKL.

A chloroplast-targeting transit peptide spans 1–49 (MAFSSSCSSVKAVNSRWTSPSPSPSSRFAVLPAFLHRRYATSVKLTAIS). The residue at position 71 (Ser71) is a Phosphoserine. NAD(+) contacts are provided by residues 231 to 232 (KV), Asp251, 310 to 312 (VAR), and Asp336. Residue Arg312 is part of the active site. Residue Glu341 is part of the active site. His360 (proton donor) is an active-site residue. Position 360-363 (360-363 (HLGA)) interacts with NAD(+). Residues 552-624 (LILCRQVDQP…AIEEFVFLKL (73 aa)) form the ACT domain.

This sequence belongs to the D-isomer specific 2-hydroxyacid dehydrogenase family. In terms of tissue distribution, ubiquitous, but highly expressed in roots and in dark-grown leaf tissues. Expressed in the vasculature, stigma, anther filaments and shoot apical meristem. Not detected in the root meristem or in embryo.

It is found in the plastid. The protein localises to the chloroplast. It catalyses the reaction (2R)-3-phosphoglycerate + NAD(+) = 3-phosphooxypyruvate + NADH + H(+). It participates in amino-acid biosynthesis; L-serine biosynthesis; L-serine from 3-phospho-D-glycerate: step 1/3. Its activity is regulated as follows. Inhibited by 90 uM 3-phosphonooxypyruvate, but not by Ser, Thr, Val, Gly Trp, O-acetyl-L-Ser and Cys. Functionally, involved in the plastidial phosphorylated pathway of serine biosynthesis (PPSB). This is D-3-phosphoglycerate dehydrogenase 2, chloroplastic (PGDH2) from Arabidopsis thaliana (Mouse-ear cress).